A 120-amino-acid chain; its full sequence is UPF0102 protein CbuK_0265 (120 aa).

The protein belongs to the UPF0102 family.

The polypeptide is UPF0102 protein CbuK_0265 (Coxiella burnetii (strain CbuK_Q154) (Coxiella burnetii (strain Q154))).